A 1362-amino-acid polypeptide reads, in one-letter code: DNA-directed RNA polymerase subunit beta (1362 aa).

This sequence belongs to the RNA polymerase beta chain family. As to quaternary structure, the RNAP catalytic core consists of 2 alpha, 1 beta, 1 beta' and 1 omega subunit. When a sigma factor is associated with the core the holoenzyme is formed, which can initiate transcription.

It catalyses the reaction RNA(n) + a ribonucleoside 5'-triphosphate = RNA(n+1) + diphosphate. DNA-dependent RNA polymerase catalyzes the transcription of DNA into RNA using the four ribonucleoside triphosphates as substrates. The chain is DNA-directed RNA polymerase subunit beta from Acinetobacter baylyi (strain ATCC 33305 / BD413 / ADP1).